We begin with the raw amino-acid sequence, 308 residues long: Phosphatidate cytidylyltransferase (308 aa).

Transmembrane regions (helical) follow at residues 30–50, 73–93, 100–120, 127–147, 167–187, 205–225, 235–255, and 280–300; these read FLVL…LGFI, PLST…FLSI, PGFF…WSIF, IGAL…GIPI, IWWA…GYFF, TVVG…IFFL, FPMP…GFFG, and MLDT…FLLI.

It belongs to the CDS family.

The protein localises to the cell membrane. It carries out the reaction a 1,2-diacyl-sn-glycero-3-phosphate + CTP + H(+) = a CDP-1,2-diacyl-sn-glycerol + diphosphate. It functions in the pathway phospholipid metabolism; CDP-diacylglycerol biosynthesis; CDP-diacylglycerol from sn-glycerol 3-phosphate: step 3/3. The protein is Phosphatidate cytidylyltransferase (cdsA) of Chlamydia pneumoniae (Chlamydophila pneumoniae).